We begin with the raw amino-acid sequence, 395 residues long: S-adenosylmethionine synthase (395 aa).

An ATP-binding site is contributed by His14. Asp16 lines the Mg(2+) pocket. Glu42 serves as a coordination point for K(+). L-methionine is bound by residues Glu55 and Gln98. Positions 98–108 are flexible loop; that stretch reads QSPDIALGVDK. Residues 174-176, 240-241, Asp249, 255-256, Ala272, and Lys276 contribute to the ATP site; these read DGK, RF, and RK. Asp249 contributes to the L-methionine binding site. Residue Lys280 coordinates L-methionine.

The protein belongs to the AdoMet synthase family. In terms of assembly, homotetramer; dimer of dimers. The cofactor is Mg(2+). It depends on K(+) as a cofactor.

The protein localises to the cytoplasm. The enzyme catalyses L-methionine + ATP + H2O = S-adenosyl-L-methionine + phosphate + diphosphate. It functions in the pathway amino-acid biosynthesis; S-adenosyl-L-methionine biosynthesis; S-adenosyl-L-methionine from L-methionine: step 1/1. Its function is as follows. Catalyzes the formation of S-adenosylmethionine (AdoMet) from methionine and ATP. The overall synthetic reaction is composed of two sequential steps, AdoMet formation and the subsequent tripolyphosphate hydrolysis which occurs prior to release of AdoMet from the enzyme. The polypeptide is S-adenosylmethionine synthase (Thermotoga maritima (strain ATCC 43589 / DSM 3109 / JCM 10099 / NBRC 100826 / MSB8)).